The sequence spans 286 residues: Probable protein S-acyltransferase 16 (286 aa).

The next 2 membrane-spanning stretches (helical) occupy residues 11–31 and 45–65; these read PVTV…FTFI and NAAA…IAVF. A DHHC domain is found at 97-147; that stretch reads RYCQKCSHFKPPRAHHCRVCKRCVLRMDHHCIWINNCVGHTNYKVFFVFVV. Cys-127 (S-palmitoyl cysteine intermediate) is an active-site residue. A run of 2 helical transmembrane segments spans residues 141-161 and 182-202; these read VFFV…VLLV and IYVI…VLLG.

Belongs to the DHHC palmitoyltransferase family.

Its subcellular location is the golgi apparatus membrane. It carries out the reaction L-cysteinyl-[protein] + hexadecanoyl-CoA = S-hexadecanoyl-L-cysteinyl-[protein] + CoA. Palmitoyl acyltransferase. The protein is Probable protein S-acyltransferase 16 (PAT16) of Arabidopsis thaliana (Mouse-ear cress).